The sequence spans 125 residues: Ribosome-binding factor A (125 aa).

The protein belongs to the RbfA family. As to quaternary structure, monomer. Binds 30S ribosomal subunits, but not 50S ribosomal subunits or 70S ribosomes.

It is found in the cytoplasm. In terms of biological role, one of several proteins that assist in the late maturation steps of the functional core of the 30S ribosomal subunit. Associates with free 30S ribosomal subunits (but not with 30S subunits that are part of 70S ribosomes or polysomes). Required for efficient processing of 16S rRNA. May interact with the 5'-terminal helix region of 16S rRNA. The polypeptide is Ribosome-binding factor A (Thermosipho melanesiensis (strain DSM 12029 / CIP 104789 / BI429)).